The chain runs to 206 residues: Dihydrofolate reductase (206 aa).

Positions 6–204 constitute a DHFR domain; that stretch reads SLTLIVALTT…FDYEFEMWTR (199 aa). NADP(+)-binding positions include Ala-12 and 18–24; that span reads GIGRSNS. A substrate-binding site is contributed by 32 to 37; that stretch reads EISYFK. Residue 59 to 61 coordinates NADP(+); it reads RKT. Arg-75 contributes to the substrate binding site. NADP(+)-binding positions include 81–83 and 124–131; these read TRN and GGAQLYKA.

Belongs to the dihydrofolate reductase family.

The catalysed reaction is (6S)-5,6,7,8-tetrahydrofolate + NADP(+) = 7,8-dihydrofolate + NADPH + H(+). Its pathway is cofactor biosynthesis; tetrahydrofolate biosynthesis; 5,6,7,8-tetrahydrofolate from 7,8-dihydrofolate: step 1/1. Key enzyme in folate metabolism. Catalyzes an essential reaction for de novo glycine and purine synthesis, and for DNA precursor synthesis. In Pneumocystis carinii, this protein is Dihydrofolate reductase.